The chain runs to 334 residues: D-fructose 1,6-bisphosphatase class 2/sedoheptulose 1,7-bisphosphatase (334 aa).

Aspartate 33, glutamate 57, aspartate 85, and glutamate 88 together coordinate Mn(2+). Substrate-binding positions include 88 to 90 (EGT), tyrosine 119, 164 to 166 (RAR), and 186 to 188 (DGD). Glutamate 213 is a Mn(2+) binding site.

Belongs to the FBPase class 2 family. Homotetramer. Mn(2+) is required as a cofactor.

It catalyses the reaction beta-D-fructose 1,6-bisphosphate + H2O = beta-D-fructose 6-phosphate + phosphate. It carries out the reaction D-sedoheptulose 1,7-bisphosphate + H2O = D-sedoheptulose 7-phosphate + phosphate. It functions in the pathway carbohydrate biosynthesis; Calvin cycle. Catalyzes the hydrolysis of fructose 1,6-bisphosphate (Fru 1,6-P2) and sedoheptulose 1,7-bisphosphate (Sed 1,7-P2) to fructose 6-phosphate and sedoheptulose 7-phosphate, respectively. This chain is D-fructose 1,6-bisphosphatase class 2/sedoheptulose 1,7-bisphosphatase, found in Synechococcus sp. (strain CC9902).